The following is a 512-amino-acid chain: Cytochrome P450 98A1 (512 aa).

Residues 3–23 (ASLLLSVALAVVLIPLSLALL) traverse the membrane as a helical segment. Residue C441 participates in heme binding.

This sequence belongs to the cytochrome P450 family. Requires heme as cofactor.

It localises to the membrane. This chain is Cytochrome P450 98A1 (CYP98A1), found in Sorghum bicolor (Sorghum).